The sequence spans 405 residues: Imidazolonepropionase (405 aa).

Fe(3+)-binding residues include His-72 and His-74. His-72 and His-74 together coordinate Zn(2+). 4-imidazolone-5-propanoate contacts are provided by Arg-81, Tyr-144, and His-177. Residue Tyr-144 participates in N-formimidoyl-L-glutamate binding. His-242 provides a ligand contact to Fe(3+). His-242 provides a ligand contact to Zn(2+). A 4-imidazolone-5-propanoate-binding site is contributed by Gln-245. Asp-317 contacts Fe(3+). Residue Asp-317 participates in Zn(2+) binding. Asn-319 and Gly-321 together coordinate N-formimidoyl-L-glutamate. 4-imidazolone-5-propanoate is bound at residue Thr-322.

This sequence belongs to the metallo-dependent hydrolases superfamily. HutI family. Requires Zn(2+) as cofactor. Fe(3+) serves as cofactor.

The protein localises to the cytoplasm. The enzyme catalyses 4-imidazolone-5-propanoate + H2O = N-formimidoyl-L-glutamate. It participates in amino-acid degradation; L-histidine degradation into L-glutamate; N-formimidoyl-L-glutamate from L-histidine: step 3/3. Its function is as follows. Catalyzes the hydrolytic cleavage of the carbon-nitrogen bond in imidazolone-5-propanoate to yield N-formimidoyl-L-glutamate. It is the third step in the universal histidine degradation pathway. This chain is Imidazolonepropionase, found in Erwinia tasmaniensis (strain DSM 17950 / CFBP 7177 / CIP 109463 / NCPPB 4357 / Et1/99).